A 330-amino-acid chain; its full sequence is Phosphate acyltransferase (330 aa).

The protein belongs to the PlsX family. As to quaternary structure, homodimer. Probably interacts with PlsY.

It is found in the cytoplasm. It catalyses the reaction a fatty acyl-[ACP] + phosphate = an acyl phosphate + holo-[ACP]. The protein operates within lipid metabolism; phospholipid metabolism. Functionally, catalyzes the reversible formation of acyl-phosphate (acyl-PO(4)) from acyl-[acyl-carrier-protein] (acyl-ACP). This enzyme utilizes acyl-ACP as fatty acyl donor, but not acyl-CoA. In Lysinibacillus sphaericus (strain C3-41), this protein is Phosphate acyltransferase.